Consider the following 463-residue polypeptide: T-box transcription factor TBX1-B (463 aa).

Disordered regions lie at residues 39-58 (SPSP…PCSA) and 75-102 (GASS…APVK). A compositionally biased stretch (low complexity) spans 75-96 (GASSSSCASSTPGSGSTGSSSG). A DNA-binding region (T-box) is located at residues 119 to 297 (LWDEFNQLGT…SNPFAKGFRD (179 aa)). Disordered stretches follow at residues 320 to 343 (RSRN…RREY) and 367 to 406 (SPSL…HHHP). A compositionally biased stretch (polar residues) spans 323 to 332 (NPVSSPPQNG). A compositionally biased stretch (basic and acidic residues) spans 333–343 (SDKDGDGRREY). Over residues 367 to 380 (SPSLPVPGGLVPLS) the composition is skewed to low complexity. A Nuclear localization signal motif is present at residues 420–431 (KTRPAPYPLPSI).

As to quaternary structure, binds DNA as a dimer. Interacts with dscr6/ripply3.

It localises to the nucleus. In terms of biological role, probable transcriptional regulator involved in developmental processes. Binds to the palindromic T site 5'-TTCACACCTAGGTGTGAA-3' DNA sequence. Induces pre-placodal ectoderm (PPE) gene expression in regions where RIPPLY3 is absent. Plays a role in the formation of the anteroposterior (AP) axis during embryonic development; required to establish the posterolateral border of the pre-placodal ectoderm (PPE) acting downstream of the retinoic acid receptor (RAR) signaling. Functionally, probable transcriptional regulator involved in developmental processes. Binds to the palindromic T site 5'-TTCACACCTAGGTGTGAA-3' DNA sequence. Is required for normal development of the pharyngeal arch arteries. The sequence is that of T-box transcription factor TBX1-B (tbx1-b) from Xenopus laevis (African clawed frog).